The chain runs to 118 residues: Large ribosomal subunit protein bL20 (118 aa).

This sequence belongs to the bacterial ribosomal protein bL20 family.

Binds directly to 23S ribosomal RNA and is necessary for the in vitro assembly process of the 50S ribosomal subunit. It is not involved in the protein synthesizing functions of that subunit. In Hamiltonella defensa subsp. Acyrthosiphon pisum (strain 5AT), this protein is Large ribosomal subunit protein bL20.